The chain runs to 354 residues: MPHPDDFSLDAYDYQLPPERIAQQPVSPRDRSRLMVVTRDTAADHYFYELPQLLAPGDLLVLNDTRVIPARLIGQKVGAAGRTVEVFLLEELSDRQWLALVKPGRKLRPGAVIQIGPLQATVQTIDEETRGRVIEFDLPPGDRLWSYLDHLGEVPLPPYIDHPLADTEQYQTVYARRPGAVAAPTAGLHFTPELFSKLADRGIDHCFLTLHVGIGTFRPVEAKDIRHHHLHEEWLEVSAATVERIQAAKAAGGRIIAVGTTVIRALETAAHSGTLQPFCGKSDLYIYPGYQPKIVEGFITNFHLPRSSLMMLVSAFIGRERLLQLYQQAIDRQYRFYSFGDAMLILPSACHNTL.

Belongs to the QueA family. As to quaternary structure, monomer.

The protein resides in the cytoplasm. The enzyme catalyses 7-aminomethyl-7-carbaguanosine(34) in tRNA + S-adenosyl-L-methionine = epoxyqueuosine(34) in tRNA + adenine + L-methionine + 2 H(+). It functions in the pathway tRNA modification; tRNA-queuosine biosynthesis. Functionally, transfers and isomerizes the ribose moiety from AdoMet to the 7-aminomethyl group of 7-deazaguanine (preQ1-tRNA) to give epoxyqueuosine (oQ-tRNA). The protein is S-adenosylmethionine:tRNA ribosyltransferase-isomerase of Thermosynechococcus vestitus (strain NIES-2133 / IAM M-273 / BP-1).